The primary structure comprises 185 residues: Elongation factor P (185 aa).

It belongs to the elongation factor P family.

Its subcellular location is the cytoplasm. It functions in the pathway protein biosynthesis; polypeptide chain elongation. Involved in peptide bond synthesis. Stimulates efficient translation and peptide-bond synthesis on native or reconstituted 70S ribosomes in vitro. Probably functions indirectly by altering the affinity of the ribosome for aminoacyl-tRNA, thus increasing their reactivity as acceptors for peptidyl transferase. The protein is Elongation factor P of Moorella thermoacetica (strain ATCC 39073 / JCM 9320).